The primary structure comprises 440 residues: Glutamyl-tRNA reductase (440 aa).

Substrate is bound by residues 55 to 58, Ser-115, 120 to 122, and Gln-126; these read TCNR and ETQ. The active-site Nucleophile is Cys-56. Position 199-204 (199-204) interacts with NADP(+); it reads GSGEMG.

It belongs to the glutamyl-tRNA reductase family. As to quaternary structure, homodimer.

The catalysed reaction is (S)-4-amino-5-oxopentanoate + tRNA(Glu) + NADP(+) = L-glutamyl-tRNA(Glu) + NADPH + H(+). It functions in the pathway porphyrin-containing compound metabolism; protoporphyrin-IX biosynthesis; 5-aminolevulinate from L-glutamyl-tRNA(Glu): step 1/2. Functionally, catalyzes the NADPH-dependent reduction of glutamyl-tRNA(Glu) to glutamate 1-semialdehyde (GSA). The protein is Glutamyl-tRNA reductase of Helicobacter hepaticus (strain ATCC 51449 / 3B1).